Here is a 121-residue protein sequence, read N- to C-terminus: UPF0295 protein ABC1323 (121 aa).

The next 2 helical transmembrane spans lie at 14-34 (TFAL…IFFK) and 41-61 (VIAM…YFFI).

It belongs to the UPF0295 family.

It is found in the cell membrane. The protein is UPF0295 protein ABC1323 of Shouchella clausii (strain KSM-K16) (Alkalihalobacillus clausii).